The sequence spans 126 residues: Aspartate 1-decarboxylase (126 aa).

Ser-25 functions as the Schiff-base intermediate with substrate; via pyruvic acid in the catalytic mechanism. Ser-25 is subject to Pyruvic acid (Ser). Thr-57 serves as a coordination point for substrate. Tyr-58 acts as the Proton donor in catalysis. Position 73 to 75 (73 to 75 (GAA)) interacts with substrate.

This sequence belongs to the PanD family. As to quaternary structure, heterooctamer of four alpha and four beta subunits. Pyruvate serves as cofactor. In terms of processing, is synthesized initially as an inactive proenzyme, which is activated by self-cleavage at a specific serine bond to produce a beta-subunit with a hydroxyl group at its C-terminus and an alpha-subunit with a pyruvoyl group at its N-terminus.

The protein resides in the cytoplasm. The catalysed reaction is L-aspartate + H(+) = beta-alanine + CO2. The protein operates within cofactor biosynthesis; (R)-pantothenate biosynthesis; beta-alanine from L-aspartate: step 1/1. Its function is as follows. Catalyzes the pyruvoyl-dependent decarboxylation of aspartate to produce beta-alanine. This is Aspartate 1-decarboxylase from Saccharophagus degradans (strain 2-40 / ATCC 43961 / DSM 17024).